Consider the following 335-residue polypeptide: MGRLNLEHTLQGHKGRIWGVAWHPKGNVFASCGEDKAIRIWSLNGNTWTTKTILSDGHKRTIREIRWSPCGQYLASASFDGTTAIWSKSSGEFECNATLEGHENEVKSVSWSRSGGLLATCSRDKSVWIWEVAGDDEFECAAVLNPHTQDVKRVVWHPTKELLASASYDNTIKMFAEDALDSDWDCVATLSSHTSTVWSIDFDATGERLVSCSDDTSLKIWQAYHPGNDAGVATPDKQTVWKCVCTISGQHSRAIYDVSWCKLTNLIATACGDDGIRIFKETSDSKRDEPTFEQLTAEEGAHDQDVNSVEWNPVVEGQLISCSDDGTIKVWKMTE.

7 WD repeats span residues 12–51, 57–96, 101–140, 146–185, 192–231, 250–289, and 301–335; these read GHKGRIWGVAWHPKGNVFASCGEDKAIRIWSLNGNTWTTK, GHKRTIREIRWSPCGQYLASASFDGTTAIWSKSSGEFECN, GHENEVKSVSWSRSGGLLATCSRDKSVWIWEVAGDDEFEC, PHTQDVKRVVWHPTKELLASASYDNTIKMFAEDALDSDWD, SHTSTVWSIDFDATGERLVSCSDDTSLKIWQAYHPGNDAG, QHSRAIYDVSWCKLTNLIATACGDDGIRIFKETSDSKRDE, and AHDQDVNSVEWNPVVEGQLISCSDDGTIKVWKMTE.

It belongs to the WD repeat CIA1 family.

Essential component of the cytosolic iron-sulfur (Fe/S) protein assembly machinery. Required for the maturation of extramitochondrial Fe/S proteins. The chain is Probable cytosolic iron-sulfur protein assembly protein Ciao1 from Drosophila ananassae (Fruit fly).